The primary structure comprises 279 residues: Mirror-image polydactyly gene 1 protein homolog (279 aa).

Positions 1–11 (MNSEQSIRELG) are enriched in basic and acidic residues. Residues 1 to 21 (MNSEQSIRELGNEVPSEDLEL) form a disordered region. Coiled-coil stretches lie at residues 65–169 (LNKE…MLEN) and 218–255 (AEEM…STNN). The interval 247-268 (KQNQTSTNNTKHPTAKNNQEHT) is disordered. Residues 248 to 263 (QNQTSTNNTKHPTAKN) are compositionally biased toward polar residues.

This Mus musculus (Mouse) protein is Mirror-image polydactyly gene 1 protein homolog (Mipol1).